The chain runs to 506 residues: MPANGTSPQRFPALIPGEPGRSFEGSVSFEDVAVDFTRQEWHRLDPAQRTMHKDVMLETYSNLASVGLCVAKPEMIFKLERGEELWILEEESSGHGYSGSLSLLCGNGSVGDNALRHDNDLLHHQKIQTLDQNVEYNGCRKAFHEKTGFVRRKRTPRGDKNFECHECGKAYCRKSNLVEHLRIHTGERPYECGECAKTFSARSYLIAHQKTHTGERPFECNECGKSFGRKSQLILHTRTHTGERPYECTECGKTFSEKATLTIHQRTHTGEKPYECSECGKTFRVKISLTQHHRTHTGEKPYECGECGKNFRAKKSLNQHQRIHTGEKPYECGECGKFFRMKMTLNNHQRTHTGEKPYQCNECGKSFRVHSSLGIHQRIHTGEKPYECNECGNAFYVKARLIEHQRMHSGEKPYECSECGKIFSMKKSLCQHRRTHTGEKPYECSECGNAFYVKVRLIEHQRIHTGERPFECQECGKAFCRKAHLTEHQRTHIGWSWRCTMKKASH.

The region spanning 27-98 (VSFEDVAVDF…EEESSGHGYS (72 aa)) is the KRAB domain. 12 C2H2-type zinc fingers span residues 162–184 (FECHECGKAYCRKSNLVEHLRIH), 190–212 (YECGECAKTFSARSYLIAHQKTH), 218–240 (FECNECGKSFGRKSQLILHTRTH), 246–268 (YECTECGKTFSEKATLTIHQRTH), 274–296 (YECSECGKTFRVKISLTQHHRTH), 302–324 (YECGECGKNFRAKKSLNQHQRIH), 330–352 (YECGECGKFFRMKMTLNNHQRTH), 358–380 (YQCNECGKSFRVHSSLGIHQRIH), 386–408 (YECNECGNAFYVKARLIEHQRMH), 414–436 (YECSECGKIFSMKKSLCQHRRTH), 442–464 (YECSECGNAFYVKVRLIEHQRIH), and 470–492 (FECQECGKAFCRKAHLTEHQRTH).

It belongs to the krueppel C2H2-type zinc-finger protein family.

The protein resides in the nucleus. Its function is as follows. May be involved in transcriptional regulation. In Homo sapiens (Human), this protein is Zinc finger protein 157 (ZNF157).